A 101-amino-acid polypeptide reads, in one-letter code: NADH-quinone oxidoreductase subunit K (101 aa).

Transmembrane regions (helical) follow at residues 4–24 (LTHY…GIFL), 30–50 (IVLL…FIAF), and 61–81 (IFVF…LAIL).

The protein belongs to the complex I subunit 4L family. In terms of assembly, NDH-1 is composed of 14 different subunits. Subunits NuoA, H, J, K, L, M, N constitute the membrane sector of the complex.

It is found in the cell inner membrane. The catalysed reaction is a quinone + NADH + 5 H(+)(in) = a quinol + NAD(+) + 4 H(+)(out). Its function is as follows. NDH-1 shuttles electrons from NADH, via FMN and iron-sulfur (Fe-S) centers, to quinones in the respiratory chain. The immediate electron acceptor for the enzyme in this species is believed to be ubiquinone. Couples the redox reaction to proton translocation (for every two electrons transferred, four hydrogen ions are translocated across the cytoplasmic membrane), and thus conserves the redox energy in a proton gradient. The chain is NADH-quinone oxidoreductase subunit K from Laribacter hongkongensis (strain HLHK9).